Consider the following 196-residue polypeptide: Elongation factor Ts (196 aa).

The tract at residues Thr80–Val83 is involved in Mg(2+) ion dislocation from EF-Tu.

It belongs to the EF-Ts family. In terms of assembly, heterotetramer composed of two EF-Ts.EF-Tu dimer complexes.

It localises to the cytoplasm. Associates with the EF-Tu.GDP complex and induces the exchange of GDP to GTP. It remains bound to the aminoacyl-tRNA.EF-Tu.GTP complex up to the GTP hydrolysis stage on the ribosome. In Thermus thermophilus (strain ATCC 27634 / DSM 579 / HB8), this protein is Elongation factor Ts (tsf).